We begin with the raw amino-acid sequence, 460 residues long: Bifunctional protein GlmU (460 aa).

Positions 1–229 (MTNYAIILAA…FNESLGVNDR (229 aa)) are pyrophosphorylase. Residues 8–11 (LAAG), Lys22, Gln72, and 77–78 (GT) contribute to the UDP-N-acetyl-alpha-D-glucosamine site. Mg(2+) is bound at residue Asp102. Residues Gly139, Glu154, Asn169, and Asn227 each coordinate UDP-N-acetyl-alpha-D-glucosamine. Residue Asn227 coordinates Mg(2+). The tract at residues 230–250 (VALATAETVMRQRITQKHMVN) is linker. An N-acetyltransferase region spans residues 251–460 (GVTFHNPETV…RLAHHPSRSK (210 aa)). Residues Arg332 and Lys350 each coordinate UDP-N-acetyl-alpha-D-glucosamine. His362 serves as the catalytic Proton acceptor. Residues Tyr365 and Asn376 each coordinate UDP-N-acetyl-alpha-D-glucosamine. Residues Ala379, 385–386 (NY), Ser404, Ala422, and Arg439 contribute to the acetyl-CoA site.

It in the N-terminal section; belongs to the N-acetylglucosamine-1-phosphate uridyltransferase family. In the C-terminal section; belongs to the transferase hexapeptide repeat family. As to quaternary structure, homotrimer. Mg(2+) is required as a cofactor.

Its subcellular location is the cytoplasm. It carries out the reaction alpha-D-glucosamine 1-phosphate + acetyl-CoA = N-acetyl-alpha-D-glucosamine 1-phosphate + CoA + H(+). The catalysed reaction is N-acetyl-alpha-D-glucosamine 1-phosphate + UTP + H(+) = UDP-N-acetyl-alpha-D-glucosamine + diphosphate. It participates in nucleotide-sugar biosynthesis; UDP-N-acetyl-alpha-D-glucosamine biosynthesis; N-acetyl-alpha-D-glucosamine 1-phosphate from alpha-D-glucosamine 6-phosphate (route II): step 2/2. Its pathway is nucleotide-sugar biosynthesis; UDP-N-acetyl-alpha-D-glucosamine biosynthesis; UDP-N-acetyl-alpha-D-glucosamine from N-acetyl-alpha-D-glucosamine 1-phosphate: step 1/1. The protein operates within bacterial outer membrane biogenesis; LPS lipid A biosynthesis. Functionally, catalyzes the last two sequential reactions in the de novo biosynthetic pathway for UDP-N-acetylglucosamine (UDP-GlcNAc). The C-terminal domain catalyzes the transfer of acetyl group from acetyl coenzyme A to glucosamine-1-phosphate (GlcN-1-P) to produce N-acetylglucosamine-1-phosphate (GlcNAc-1-P), which is converted into UDP-GlcNAc by the transfer of uridine 5-monophosphate (from uridine 5-triphosphate), a reaction catalyzed by the N-terminal domain. This chain is Bifunctional protein GlmU, found in Streptococcus pyogenes serotype M3 (strain ATCC BAA-595 / MGAS315).